The chain runs to 167 residues: Transmembrane protein 229B (167 aa).

Residues methionine 1–tyrosine 14 are Cytoplasmic-facing. A helical transmembrane segment spans residues leucine 15–valine 35. The Extracellular portion of the chain corresponds to asparagine 36–lysine 40. Residues phenylalanine 41–glutamate 61 traverse the membrane as a helical segment. Residues arginine 62–leucine 73 are Cytoplasmic-facing. A helical membrane pass occupies residues leucine 74–isoleucine 94. The Extracellular segment spans residues leucine 95–aspartate 109. Residues phenylalanine 110–isoleucine 130 traverse the membrane as a helical segment. The Cytoplasmic segment spans residues methionine 131 to aspartate 167.

The protein belongs to the TMEM229 family.

Its subcellular location is the membrane. The polypeptide is Transmembrane protein 229B (TMEM229B) (Homo sapiens (Human)).